Reading from the N-terminus, the 586-residue chain is Protein CBFA2T2 (586 aa).

The disordered stretch occupies residues 1 to 95 (MVGIPGPYQF…SSSSSLANQQ (95 aa)). Polar residues predominate over residues 56 to 68 (SSHSNGINHSPPT). Over residues 77–90 (QRSSNGPSSSSSSS) the composition is skewed to low complexity. The TAFH domain maps to 102–197 (VRQLSKLKRF…TPSQYLAQHE (96 aa)). Disordered stretches follow at residues 204 to 242 (STSS…AEPP) and 387 to 417 (IRKG…FGSR). Over residues 228 to 237 (DRREEERETA) the composition is skewed to basic and acidic residues. Residues 399 to 409 (SPSSTDSGASD) are compositionally biased toward low complexity. Positions 429–481 (RKAEEAVNEVKRQAMSEVQKAVSEAEQKAFEMIASERARMEQTIVDAKRRAAE) form a coiled coil. 8 residues coordinate Zn(2+): Cys497, Cys500, Cys508, Cys511, Cys517, Cys521, His529, and Cys533. The segment at 497–533 (CWNCGRKASETCSGCNIARYCGSFCQHKDWEKHHRIC) adopts an MYND-type zinc-finger fold. The disordered stretch occupies residues 561–586 (SPTLERSSSATSRSSTPASVTAVDGL). The segment covering 566–586 (RSSSATSRSSTPASVTAVDGL) has biased composition (low complexity).

The protein localises to the nucleus. Its function is as follows. May act as a transcriptional corepressor. The protein is Protein CBFA2T2 (cbfa2t2) of Xenopus laevis (African clawed frog).